We begin with the raw amino-acid sequence, 213 residues long: Guanylate kinase (213 aa).

The 179-residue stretch at 12–190 (GLCLVVAAPS…AIDQVRTILH (179 aa)) folds into the Guanylate kinase-like domain. Residue 19–26 (APSGAGKS) participates in ATP binding.

It belongs to the guanylate kinase family.

The protein resides in the cytoplasm. The enzyme catalyses GMP + ATP = GDP + ADP. Its function is as follows. Essential for recycling GMP and indirectly, cGMP. This is Guanylate kinase from Granulibacter bethesdensis (strain ATCC BAA-1260 / CGDNIH1).